The chain runs to 232 residues: Large ribosomal subunit protein uL1 (232 aa).

It belongs to the universal ribosomal protein uL1 family. Part of the 50S ribosomal subunit.

Binds directly to 23S rRNA. The L1 stalk is quite mobile in the ribosome, and is involved in E site tRNA release. Functionally, protein L1 is also a translational repressor protein, it controls the translation of the L11 operon by binding to its mRNA. This chain is Large ribosomal subunit protein uL1, found in Bacteroides fragilis (strain ATCC 25285 / DSM 2151 / CCUG 4856 / JCM 11019 / LMG 10263 / NCTC 9343 / Onslow / VPI 2553 / EN-2).